Consider the following 274-residue polypeptide: Shikimate dehydrogenase (NADP(+)) (274 aa).

Residues 14-16 and threonine 60 each bind shikimate; that span reads SKS. Lysine 64 functions as the Proton acceptor in the catalytic mechanism. Glutamate 76 provides a ligand contact to NADP(+). Asparagine 85 and aspartate 101 together coordinate shikimate. Residues 126-130, 150-155, and methionine 214 each bind NADP(+); these read GAGGA and NRTARK. Tyrosine 216 provides a ligand contact to shikimate. Glycine 238 is a binding site for NADP(+).

This sequence belongs to the shikimate dehydrogenase family. In terms of assembly, homodimer.

The enzyme catalyses shikimate + NADP(+) = 3-dehydroshikimate + NADPH + H(+). Its pathway is metabolic intermediate biosynthesis; chorismate biosynthesis; chorismate from D-erythrose 4-phosphate and phosphoenolpyruvate: step 4/7. Its function is as follows. Involved in the biosynthesis of the chorismate, which leads to the biosynthesis of aromatic amino acids. Catalyzes the reversible NADPH linked reduction of 3-dehydroshikimate (DHSA) to yield shikimate (SA). This is Shikimate dehydrogenase (NADP(+)) from Pseudomonas aeruginosa (strain ATCC 15692 / DSM 22644 / CIP 104116 / JCM 14847 / LMG 12228 / 1C / PRS 101 / PAO1).